The following is a 248-amino-acid chain: Pyridoxine 5'-phosphate synthase (248 aa).

Asn-12 is a 3-amino-2-oxopropyl phosphate binding site. 14-15 (DH) serves as a coordination point for 1-deoxy-D-xylulose 5-phosphate. Residue Arg-23 participates in 3-amino-2-oxopropyl phosphate binding. The Proton acceptor role is filled by His-48. Residues Arg-50 and His-55 each contribute to the 1-deoxy-D-xylulose 5-phosphate site. The Proton acceptor role is filled by Glu-75. Position 105 (Thr-105) interacts with 1-deoxy-D-xylulose 5-phosphate. The active-site Proton donor is His-196. Residues Gly-197 and 218–219 (GH) contribute to the 3-amino-2-oxopropyl phosphate site.

It belongs to the PNP synthase family. Homooctamer; tetramer of dimers.

Its subcellular location is the cytoplasm. It carries out the reaction 3-amino-2-oxopropyl phosphate + 1-deoxy-D-xylulose 5-phosphate = pyridoxine 5'-phosphate + phosphate + 2 H2O + H(+). It functions in the pathway cofactor biosynthesis; pyridoxine 5'-phosphate biosynthesis; pyridoxine 5'-phosphate from D-erythrose 4-phosphate: step 5/5. Its function is as follows. Catalyzes the complicated ring closure reaction between the two acyclic compounds 1-deoxy-D-xylulose-5-phosphate (DXP) and 3-amino-2-oxopropyl phosphate (1-amino-acetone-3-phosphate or AAP) to form pyridoxine 5'-phosphate (PNP) and inorganic phosphate. The protein is Pyridoxine 5'-phosphate synthase of Ectopseudomonas mendocina (strain ymp) (Pseudomonas mendocina).